A 46-amino-acid chain; its full sequence is Hellethionin-D (46 aa).

4 disulfides stabilise this stretch: cysteine 3-cysteine 40, cysteine 4-cysteine 32, cysteine 12-cysteine 30, and cysteine 16-cysteine 26.

Belongs to the plant thionin (TC 1.C.44) family. 4 C-C subfamily.

Its subcellular location is the secreted. Functionally, thionins are small plant proteins which are toxic to animal cells. They seem to exert their toxic effect at the level of the cell membrane. Their precise function is not known. In Helleborus purpurascens (Purple hellebore), this protein is Hellethionin-D.